The sequence spans 96 residues: Small ribosomal subunit protein bS6 (96 aa).

This sequence belongs to the bacterial ribosomal protein bS6 family.

Binds together with bS18 to 16S ribosomal RNA. This chain is Small ribosomal subunit protein bS6, found in Acidothermus cellulolyticus (strain ATCC 43068 / DSM 8971 / 11B).